A 174-amino-acid polypeptide reads, in one-letter code: UPF0113 protein APE_0516.1 (174 aa).

Belongs to the UPF0113 family.

The protein is UPF0113 protein APE_0516.1 of Aeropyrum pernix (strain ATCC 700893 / DSM 11879 / JCM 9820 / NBRC 100138 / K1).